Reading from the N-terminus, the 174-residue chain is MAQESCDLNKDEAEILKPSSSSSPSPSPTTASPSPPTAQMTEPPPPQSTPPTPPAAAAAASAAAAPQFSAKNCEGILIEVSKKRKLAEATATDANAVVVAAVAEPLSPVLFVNRCNVCRKRVGLTGFRCRCGELFCPRHRHSETHECSFDYKTAGREEIARANPVIRAAKIIKI.

The interval 1-61 (MAQESCDLNK…TPPAAAAAAS (61 aa)) is disordered. A compositionally biased stretch (low complexity) spans 18 to 41 (PSSSSSPSPSPTTASPSPPTAQMT). Residues 42-54 (EPPPPQSTPPTPP) show a composition bias toward pro residues. The AN1-type zinc finger occupies 109–155 (VLFVNRCNVCRKRVGLTGFRCRCGELFCPRHRHSETHECSFDYKTAG). Residues C115, C118, C129, C131, C136, H139, H145, and C147 each contribute to the Zn(2+) site.

In terms of biological role, may be involved in environmental stress response. The sequence is that of Zinc finger AN1 domain-containing stress-associated protein 15 (SAP15) from Oryza sativa subsp. japonica (Rice).